Consider the following 132-residue polypeptide: D-ribose pyranase (132 aa).

Residue His-20 is the Proton donor of the active site. Substrate contacts are provided by residues Asp-28, His-99, and Tyr-121 to Asn-123.

This sequence belongs to the RbsD / FucU family. RbsD subfamily. In terms of assembly, homodecamer.

The protein resides in the cytoplasm. It catalyses the reaction beta-D-ribopyranose = beta-D-ribofuranose. It functions in the pathway carbohydrate metabolism; D-ribose degradation; D-ribose 5-phosphate from beta-D-ribopyranose: step 1/2. In terms of biological role, catalyzes the interconversion of beta-pyran and beta-furan forms of D-ribose. The polypeptide is D-ribose pyranase (Lactococcus lactis subsp. cremoris (strain MG1363)).